Reading from the N-terminus, the 882-residue chain is Alanine--tRNA ligase (882 aa).

Zn(2+) is bound by residues histidine 570, histidine 574, cysteine 672, and histidine 676.

It belongs to the class-II aminoacyl-tRNA synthetase family. Zn(2+) serves as cofactor.

Its subcellular location is the cytoplasm. It carries out the reaction tRNA(Ala) + L-alanine + ATP = L-alanyl-tRNA(Ala) + AMP + diphosphate. Its function is as follows. Catalyzes the attachment of alanine to tRNA(Ala) in a two-step reaction: alanine is first activated by ATP to form Ala-AMP and then transferred to the acceptor end of tRNA(Ala). Also edits incorrectly charged Ser-tRNA(Ala) and Gly-tRNA(Ala) via its editing domain. The chain is Alanine--tRNA ligase from Xanthomonas campestris pv. campestris (strain 8004).